Consider the following 124-residue polypeptide: MPRLKTRREKRLRRHKRIRKKVFGTPERPRLCVYRSLNHFYAQIIDDTIGHTLVSASTLDPEFEKITGKRGGKSIKDAEVVAEIIARRALEKGIKKVVFDRGGFKYHGKIKAFADKCREMGLEF.

The protein belongs to the universal ribosomal protein uL18 family. As to quaternary structure, part of the 50S ribosomal subunit; part of the 5S rRNA/L5/L18/L25 subcomplex. Contacts the 5S and 23S rRNAs.

In terms of biological role, this is one of the proteins that bind and probably mediate the attachment of the 5S RNA into the large ribosomal subunit, where it forms part of the central protuberance. The chain is Large ribosomal subunit protein uL18 from Aquifex pyrophilus.